Consider the following 640-residue polypeptide: Chaperone protein DnaK (640 aa).

The residue at position 199 (Thr-199) is a Phosphothreonine; by autocatalysis. Over residues 606-621 (QQAAGAGAQQADGTGK) the composition is skewed to low complexity. A disordered region spans residues 606–640 (QQAAGAGAQQADGTGKAADDGVVDAEFEEVKEDNK). Acidic residues predominate over residues 626-640 (GVVDAEFEEVKEDNK).

The protein belongs to the heat shock protein 70 family.

Its function is as follows. Acts as a chaperone. The protein is Chaperone protein DnaK of Cellvibrio japonicus (strain Ueda107) (Pseudomonas fluorescens subsp. cellulosa).